We begin with the raw amino-acid sequence, 140 residues long: Transcription antitermination protein NusB (140 aa).

This sequence belongs to the NusB family.

Involved in transcription antitermination. Required for transcription of ribosomal RNA (rRNA) genes. Binds specifically to the boxA antiterminator sequence of the ribosomal RNA (rrn) operons. This is Transcription antitermination protein NusB from Thermoanaerobacter pseudethanolicus (strain ATCC 33223 / 39E) (Clostridium thermohydrosulfuricum).